Reading from the N-terminus, the 714-residue chain is Protein artemis (714 aa).

4 disordered regions span residues 391–500 (ELFD…ESNA), 516–577 (ESSE…TVLI), 598–617 (ALLS…RWKL), and 638–683 (EKDA…LTPD). Residues 427-440 (NESTESYRANTAYT) show a composition bias toward polar residues. Over residues 447-468 (VDCEESNDDDDDDDDDDKEDDS) the composition is skewed to acidic residues. 2 stretches are compositionally biased toward polar residues: residues 484 to 500 (SIAS…ESNA) and 532 to 543 (GSQSLFSDSDGV). Residues 544-561 (SDSTHISSQNSSQSTHIS) show a composition bias toward low complexity. Over residues 562-577 (EQGSQGWDSQMDTVLI) the composition is skewed to polar residues. Basic and acidic residues-rich tracts occupy residues 603-615 (DTPR…DSRW) and 660-670 (RTPDLELKRDS). Ser670 carries the phosphoserine; by ATM modification.

This sequence belongs to the DNA repair metallo-beta-lactamase (DRMBL) family. As to quaternary structure, interacts with PRKDC. Post-translationally, phosphorylation on undefined residues by PRKDC may stimulate endonucleolytic activity on 5' and 3' hairpins and overhangs. PRKDC must remain present, even after phosphorylation, for efficient hairpin opening.

The protein resides in the nucleus. Functionally, required for V(D)J recombination, the process by which exons encoding the antigen-binding domains of immunoglobulins and T-cell receptor proteins are assembled from individual V, (D), and J gene segments. V(D)J recombination is initiated by the lymphoid specific RAG endonuclease complex, which generates site specific DNA double strand breaks (DSBs). These DSBs present two types of DNA end structures: hairpin sealed coding ends and phosphorylated blunt signal ends. These ends are independently repaired by the non homologous end joining (NHEJ) pathway to form coding and signal joints respectively. This protein exhibits single-strand specific 5'-3' exonuclease activity in isolation, and acquires endonucleolytic activity on 5' and 3' hairpins and overhangs when in a complex with PRKDC. The latter activity is required specifically for the resolution of closed hairpins prior to the formation of the coding joint. May also be required for the repair of complex DSBs induced by ionizing radiation, which require substantial end-processing prior to religation by NHEJ. The sequence is that of Protein artemis (DCLRE1C) from Gallus gallus (Chicken).